The sequence spans 124 residues: Probable glycine cleavage system H protein (124 aa).

The region spanning 22 to 104 is the Lipoyl-binding domain; sequence TGRVGISEFA…FGDGWLVEID (83 aa). Lysine 63 carries the post-translational modification N6-lipoyllysine.

It belongs to the GcvH family. In terms of assembly, the glycine cleavage system is composed of four proteins: P, T, L and H. (R)-lipoate serves as cofactor.

Functionally, the glycine cleavage system catalyzes the degradation of glycine. The H protein shuttles the methylamine group of glycine from the P protein to the T protein. In Halobacterium salinarum (strain ATCC 700922 / JCM 11081 / NRC-1) (Halobacterium halobium), this protein is Probable glycine cleavage system H protein.